We begin with the raw amino-acid sequence, 131 residues long: Inactive protein FON2 SPARE1 (131 aa).

Residues 67–131 (SPSSLTTTDR…VPTGPNPLHH (65 aa)) are disordered. Positions 76–97 (RHHHHHRHHGHHHHRGHDRWNR) are enriched in basic residues.

Belongs to the CLV3/ESR signal peptide family. Expressed in all aerial apical meristems, including the floral and inflorescence meristems in the reproductive phase and the shoot apical meristem in the vegetative phase. Also detected in the primordia of lateral organs such as the leaf and the floral organs.

Non functional suppressor of the fon2 mutation. In Oryza sativa subsp. japonica, the protein has a single amino acid substitution at the putative processing site of the signal peptide while in all the other varieties/species of domesticated and wild rice tested the protein is functional. The sequence is that of Inactive protein FON2 SPARE1 (FOS1) from Oryza sativa subsp. japonica (Rice).